Consider the following 102-residue polypeptide: Flagellar hook-basal body complex protein FliE (102 aa).

It belongs to the FliE family.

It is found in the bacterial flagellum basal body. In Halalkalibacterium halodurans (strain ATCC BAA-125 / DSM 18197 / FERM 7344 / JCM 9153 / C-125) (Bacillus halodurans), this protein is Flagellar hook-basal body complex protein FliE.